A 128-amino-acid polypeptide reads, in one-letter code: L-ectoine synthase (128 aa).

It belongs to the ectoine synthase family.

The enzyme catalyses (2S)-4-acetamido-2-aminobutanoate = L-ectoine + H2O. Its pathway is amine and polyamine biosynthesis; ectoine biosynthesis; L-ectoine from L-aspartate 4-semialdehyde: step 3/3. In terms of biological role, catalyzes the circularization of gamma-N-acetyl-alpha,gamma-diaminobutyric acid (ADABA) to ectoine (1,4,5,6-tetrahydro-2-methyl-4-pyrimidine carboxylic acid), which is an excellent osmoprotectant. The sequence is that of L-ectoine synthase from Aliivibrio fischeri (strain ATCC 700601 / ES114) (Vibrio fischeri).